A 155-amino-acid chain; its full sequence is Basic phospholipase A2 PC1 (155 aa).

Residues 1-21 form the signal peptide; sequence MYPAHLLVLLAVCVSLLGASA. The propeptide occupies 22-27; sequence ISNRPR. Intrachain disulfides connect Cys-38-Cys-98, Cys-54-Cys-144, Cys-56-Cys-72, Cys-71-Cys-125, Cys-78-Cys-118, Cys-87-Cys-111, and Cys-105-Cys-116. Residues Tyr-55, Gly-57, and Gly-59 each contribute to the Ca(2+) site. Residue His-75 is part of the active site. Asp-76 provides a ligand contact to Ca(2+). The active site involves Asp-119.

This sequence belongs to the phospholipase A2 family. Group I subfamily. D49 sub-subfamily. The cofactor is Ca(2+). As to expression, expressed by the venom gland.

The protein resides in the secreted. The enzyme catalyses a 1,2-diacyl-sn-glycero-3-phosphocholine + H2O = a 1-acyl-sn-glycero-3-phosphocholine + a fatty acid + H(+). In terms of biological role, snake venom phospholipase A2 (PLA2) that inhibits neuromuscular transmission by blocking acetylcholine release from the nerve termini. PLA2 catalyzes the calcium-dependent hydrolysis of the 2-acyl groups in 3-sn-phosphoglycerides. In Laticauda colubrina (Yellow-lipped sea krait), this protein is Basic phospholipase A2 PC1.